A 465-amino-acid polypeptide reads, in one-letter code: MTTIPRKGSSHLPGSLHTCKLKLQEDRRQQEKSVIAQPIFVFEKGEQTFKRPAEDTLYEAAEPECNGFPTKRVRSSSFTFHITDSQSQGVRKNNVFMTSALVQSSVDIKSAEQGPVKHSKHVIRPAILQLPQARSCAKVRKTFGHKALESCKTKEKTNNKISEGNSYLLSENLSRARISVQLSTNQDFLGATSVGCQPNEDKCSFKSCSSNFVFGENMVERVLGTQKLTQPQLENDSYAKEKPFKSIPKFPVNFLSSRTDSIKNTSLIESAAAFSSQPSRKCLLEKIDVITGEETEHNVLKINCKLFIFNKTTQSWIERGRGTLRLNDTASTDCGTLQSRLIMRNQGSLRLILNSKLWAQMKIQRANHKNVRITATDLEDYSIKIFLIQASAQDTAYLYAAIHHRLVALQSFNKQRDVNQAESLSETAQQLNCESCDENEDDFIQVTKNGSDPSSWTHRQSVACS.

The region spanning 276 to 417 is the RanBD1 domain; the sequence is SQPSRKCLLE…ALQSFNKQRD (142 aa).

In terms of assembly, interacts with SMAD1, SMAD5 and SMAD8; the interaction (with SMAD at least) increases when SMAD1 is not phosphorylated and mediates SMAD1 nuclear export.

The protein localises to the nucleus. It is found in the cytoplasm. Functionally, nuclear export factor for BMP-specific SMAD1/5/8 that plays a critical role in terminating BMP signaling and regulating mesenchymal stem cell differentiation by blocking osteoblast differentiation to promote myogenic differention. Directly recognizes dephosphorylated SMAD1/5/8 and mediates their nuclear export in a Ran-dependent manner. The polypeptide is Ran-binding protein 3-like (RANBP3L) (Homo sapiens (Human)).